The chain runs to 477 residues: Glycogen synthase (477 aa).

Lysine 15 is a binding site for ADP-alpha-D-glucose.

Belongs to the glycosyltransferase 1 family. Bacterial/plant glycogen synthase subfamily.

It carries out the reaction [(1-&gt;4)-alpha-D-glucosyl](n) + ADP-alpha-D-glucose = [(1-&gt;4)-alpha-D-glucosyl](n+1) + ADP + H(+). The protein operates within glycan biosynthesis; glycogen biosynthesis. Functionally, synthesizes alpha-1,4-glucan chains using ADP-glucose. This Streptococcus pneumoniae serotype 4 (strain ATCC BAA-334 / TIGR4) protein is Glycogen synthase.